The chain runs to 503 residues: E3 ubiquitin-protein ligase IE61 (503 aa).

An RING-type zinc finger spans residues 19-58; sequence CAICMSAISGLGKTLPCLHDFCFVCIQTWTSTSAQCPLCR. Disordered stretches follow at residues 175–194, 367–418, and 445–503; these read AVIT…PSSR, SGPI…LFVD, and AALP…VRRK. The span at 375 to 388 shows a compositional bias: polar residues; sequence GGSTSQDTSVSNIH. The segment covering 389–403 has biased composition (low complexity); the sequence is RSPPGGSSTQPSSGR. Basic residues predominate over residues 404-414; the sequence is RPGRPKGVKRR. The span at 471–480 shows a compositional bias: low complexity; it reads PSTSGSSPSP.

In terms of assembly, interacts with host BTRC; this interaction seems to inactivate SCF-mediated protein degradation in general.

It catalyses the reaction S-ubiquitinyl-[E2 ubiquitin-conjugating enzyme]-L-cysteine + [acceptor protein]-L-lysine = [E2 ubiquitin-conjugating enzyme]-L-cysteine + N(6)-ubiquitinyl-[acceptor protein]-L-lysine.. Its function is as follows. RING-finger E3 ubiquitin ligase that degrades host SP100, one of the major components of ND10 nuclear bodies, thereby disrupting the organization of these bodies. Also plays a role in the inhibition of host NF-kappa-B pathway by blocking the SCF(BTRC)-mediated addition of ubiquitin chains to host IkappaBalpha/NFKBIA, thereby interfering with its degradation. This chain is E3 ubiquitin-protein ligase IE61, found in Cercopithecine herpesvirus 9 (strain DHV) (CeHV-9).